The sequence spans 465 residues: Hexokinase-4 (465 aa).

One can recognise a Hexokinase domain in the interval 10–454 (ATKKEKVEQI…SGRGAALVSA (445 aa)). Residues 67–203 (EGSEVGDFLS…DFEMDVVAMV (137 aa)) form a hexokinase small subdomain region. 78 to 83 (DLGGTN) contacts ATP. Residues 151-152 (SF), 168-169 (TK), and 204-205 (ND) contribute to the substrate site. The hexokinase large subdomain stretch occupies residues 204-443 (NDTVATMISC…CEITFIESEE (240 aa)). ATP is bound at residue Thr228. Substrate contacts are provided by Asn231, Glu256, and Glu290. ATP is bound by residues 295–296 (GK), 332–336 (TRFVS), and 411–415 (SVYKL).

It belongs to the hexokinase family. In terms of assembly, monomer. Interacts with MIDN; the interaction occurs preferentially at low glucose levels and results in inhibition of hexokinase activity. Interacts with GCKR; leading to sequestration in the nucleus.

It is found in the cytoplasm. The protein resides in the nucleus. The protein localises to the mitochondrion. It carries out the reaction a D-hexose + ATP = a D-hexose 6-phosphate + ADP + H(+). The catalysed reaction is D-fructose + ATP = D-fructose 6-phosphate + ADP + H(+). It catalyses the reaction D-glucose + ATP = D-glucose 6-phosphate + ADP + H(+). The enzyme catalyses D-mannose + ATP = D-mannose 6-phosphate + ADP + H(+). It functions in the pathway carbohydrate metabolism; hexose metabolism. The protein operates within carbohydrate degradation; glycolysis; D-glyceraldehyde 3-phosphate and glycerone phosphate from D-glucose: step 1/4. With respect to regulation, subject to allosteric regulation. Low glucose and high fructose-6-phosphate triggers association with the inhibitor GCKR followed by sequestration in the nucleus. Its function is as follows. Catalyzes the phosphorylation of hexose, such as D-glucose, D-fructose and D-mannose, to hexose 6-phosphate (D-glucose 6-phosphate, D-fructose 6-phosphate and D-mannose 6-phosphate, respectively). Compared to other hexokinases, has a weak affinity for D-glucose, and is effective only when glucose is abundant. Mainly expressed in pancreatic beta cells and the liver and constitutes a rate-limiting step in glucose metabolism in these tissues. Since insulin secretion parallels glucose metabolism and the low glucose affinity of GCK ensures that it can change its enzymatic activity within the physiological range of glucose concentrations, GCK acts as a glucose sensor in the pancreatic beta cell. In pancreas, plays an important role in modulating insulin secretion. In liver, helps to facilitate the uptake and conversion of glucose by acting as an insulin-sensitive determinant of hepatic glucose usage. Required to provide D-glucose 6-phosphate for the synthesis of glycogen. Mediates the initial step of glycolysis by catalyzing phosphorylation of D-glucose to D-glucose 6-phosphate. The protein is Hexokinase-4 of Mus musculus (Mouse).